We begin with the raw amino-acid sequence, 458 residues long: MAPNDPKKAVGGGGSGFFASLASSISNLGSAMTKSVNGLVPYEGLEVINPEGSTDDAEEEASRGRWKQEDRDGYWKMMQKYIGSDVTSMVTLPVIIFEPMTMLQKMAELMEYSHLLDMADKTEDPYLRMVYASSWAISVYYAFQRTWKPFNPILGETYEMANYNGVNFISEQVSHHPPMSAGHAENEHFTYDCTSKLKTKFLGNSIDVYPVGRTRVTLKRDGVVLDLVPPLTKVHNLIFGRTWVDSPGEMIMTNQTTGDKVVLYFQPCGWFGSGRYEVDGYVYNASEEPKILMTGKWNESMSYQPCDGEGEPLPGTELKEVWKLADVPKDDKYQYTHFAHKINSFDTAPKKLLPSDSRLRPDRYALEMGDMSKSGYEKSSMEERQRAEKRTREEKGQAFTPKWFDVTEEVTATPWGDLEVYQFNGKYSEHRAAADNSEDNTDPKSIQFNPWQFQDLST.

Disordered regions lie at residues Val-47 to Trp-66, Asp-370 to Pro-401, and Arg-431 to Thr-458. The span at Gly-375–Gly-396 shows a compositional bias: basic and acidic residues. The span at Pro-443–Thr-458 shows a compositional bias: polar residues.

The protein belongs to the OSBP family. As to expression, expressed in roots, leaves, stems and flowers.

Its function is as follows. May be involved in the transport of sterols. The sequence is that of Oxysterol-binding protein-related protein 3B (ORP3B) from Arabidopsis thaliana (Mouse-ear cress).